We begin with the raw amino-acid sequence, 140 residues long: ATP synthase epsilon chain (140 aa).

The protein belongs to the ATPase epsilon chain family. As to quaternary structure, F-type ATPases have 2 components, CF(1) - the catalytic core - and CF(0) - the membrane proton channel. CF(1) has five subunits: alpha(3), beta(3), gamma(1), delta(1), epsilon(1). CF(0) has three main subunits: a, b and c.

It localises to the cell inner membrane. In terms of biological role, produces ATP from ADP in the presence of a proton gradient across the membrane. This Nitrosococcus oceani (strain ATCC 19707 / BCRC 17464 / JCM 30415 / NCIMB 11848 / C-107) protein is ATP synthase epsilon chain.